The sequence spans 658 residues: Alkyldihydroxyacetonephosphate synthase, peroxisomal (658 aa).

Low complexity predominate over residues 1–24; it reads MAEAAAAAAAAAAAGETSASSGSA. A disordered region spans residues 1-37; that stretch reads MAEAAAAAAAAAAAGETSASSGSAAERDPDQDRAGRR. The transit peptide at 1-58 directs the protein to the peroxisome; it reads MAEAAAAAAAAAAAGETSASSGSAAERDPDQDRAGRRLRVLSGHLLGRPQEALSTNEC. Positions 25 to 35 are enriched in basic and acidic residues; it reads AERDPDQDRAG. The residue at position 65 (Ser-65) is a Phosphoserine. At Thr-74 the chain carries Phosphothreonine. An N6-acetyllysine modification is found at Lys-102. The 183-residue stretch at 202 to 384 folds into the FAD-binding PCMH-type domain; it reads FERIPDIVLW…TEATIKIRPT (183 aa). FAD is bound by residues 234–240, 303–309, and 316–319; these read PIGGGTS, DSLEFST, and TRAS. Lys-347 is subject to N6-acetyllysine. 368–374 contacts FAD; it reads EGTLGVI. A substrate-binding site is contributed by Arg-515. Tyr-578 (proton donor/acceptor) is an active-site residue. 2 important for enzyme activity regions span residues 615-617 and 654-658; these read HHH and NRNLL.

This sequence belongs to the FAD-binding oxidoreductase/transferase type 4 family. Homodimer. Requires FAD as cofactor.

Its subcellular location is the peroxisome membrane. It localises to the peroxisome. It catalyses the reaction a long chain fatty alcohol + a 1-acylglycerone 3-phosphate = a 1-O-alkylglycerone 3-phosphate + a long-chain fatty acid + H(+). The enzyme catalyses hexadecan-1-ol + 1-hexadecanoylglycerone 3-phosphate = 1-O-hexadecylglycerone 3-phosphate + hexadecanoate + H(+). The catalysed reaction is 1-hexadecanoylglycerone 3-phosphate + a long-chain fatty acid = a 1-acylglycerone 3-phosphate + hexadecanoate. The protein operates within glycerolipid metabolism; ether lipid biosynthesis. Inhibited by N-ethylmaleimide, p-bromophenacylbromide, 2,4- dinitrofluorobenzene and divalent cations such as such as Mn(2+), Mg(2+) and Zn(2+). Inhibition by p-bromophenacylbromide is strongly pH dependent and is highest at alkaline conditions. Its function is as follows. Catalyzes the exchange of the acyl chain in acyl-dihydroxyacetonephosphate (acyl-DHAP) for a long chain fatty alcohol, yielding the first ether linked intermediate, i.e. alkyl-dihydroxyacetonephosphate (alkyl-DHAP), in the pathway of ether lipid biosynthesis. The sequence is that of Alkyldihydroxyacetonephosphate synthase, peroxisomal (AGPS) from Cavia porcellus (Guinea pig).